Here is a 348-residue protein sequence, read N- to C-terminus: D-amino-acid oxidase (348 aa).

Positions 15, 18, 40, 52, 56, and 58 each coordinate FAD. Tyr-232 and Arg-295 together coordinate (R)-lactate. Residues Tyr-232 and Arg-295 each contribute to the anthranilate site. Residues Arg-295, Ser-323, Gly-326, Tyr-327, and Gln-328 each coordinate FAD.

The protein belongs to the DAMOX/DASOX family. It depends on FAD as a cofactor.

It localises to the peroxisome. The catalysed reaction is a D-alpha-amino acid + O2 + H2O = a 2-oxocarboxylate + H2O2 + NH4(+). It catalyses the reaction D-serine + O2 + H2O = 3-hydroxypyruvate + H2O2 + NH4(+). It carries out the reaction D-alanine + O2 + H2O = pyruvate + H2O2 + NH4(+). The enzyme catalyses D-arginine + O2 + H2O = 5-guanidino-2-oxopentanoate + H2O2 + NH4(+). Its function is as follows. Catalyzes the oxidative deamination of D-amino acids with broad substrate specificity. Enables the organism to utilize D-amino acids as a source of nutrients. The chain is D-amino-acid oxidase from Schizosaccharomyces pombe (strain 972 / ATCC 24843) (Fission yeast).